Reading from the N-terminus, the 252-residue chain is Serine/threonine phosphatase stp (252 aa).

Positions 1–22 (MHAEFRTDRGRIRHHNEDNGGV) are disordered. One can recognise a PPM-type phosphatase domain in the interval 2-242 (HAEFRTDRGR…DNITVLLVER (241 aa)). Mn(2+) contacts are provided by D36, G37, D194, and D233.

The protein belongs to the PP2C family. Requires Mn(2+) as cofactor.

Its subcellular location is the cytoplasm. The protein localises to the membrane. The enzyme catalyses O-phospho-L-seryl-[protein] + H2O = L-seryl-[protein] + phosphate. It carries out the reaction O-phospho-L-threonyl-[protein] + H2O = L-threonyl-[protein] + phosphate. Its function is as follows. Protein phosphatase that dephosphorylates EF-Tu. The polypeptide is Serine/threonine phosphatase stp (stp) (Listeria innocua serovar 6a (strain ATCC BAA-680 / CLIP 11262)).